Reading from the N-terminus, the 368-residue chain is Cyclic di-GMP phosphodiesterase TM_0186 (368 aa).

The region spanning 2 to 114 is the Response regulatory domain; sequence TVLIVEDDDI…LLRLKITHAL (113 aa). Asp-49 is subject to 4-aspartylphosphate. One can recognise an HD-GYP domain in the interval 148-345; that stretch reads YEDFLFEVLE…ITDVYRREKD (198 aa). Residues Glu-169, His-173, His-205, Asp-206, His-234, His-260, His-261, and Asp-289 each coordinate a divalent metal cation. Residues 341-368 are disordered; sequence RREKDEDTSHNGGRSHQSSPGEGVEGIR. Over residues 350 to 360 the composition is skewed to polar residues; the sequence is HNGGRSHQSSP.

The enzyme catalyses 3',3'-c-di-GMP + 2 H2O = 2 GMP + 2 H(+). With respect to regulation, can function in vivo with either divalent iron or manganese occupying di- and trimetal sites. Dimetal is necessary and sufficient to catalyze conversion of c-di-GMP to pGpG, but conversion of pGpG to GMP requires an occupied trimetal site. Phosphodiesterase (PDE) that catalyzes the hydrolysis of cyclic diguanylate (c-di-GMP) to GMP. Hydrolyzes c-di-GMP to GMP in a two-step reaction, via the linear intermediate 5'-phosphoguanylyl(3'-&gt;5')guanosine (pGpG). This is Cyclic di-GMP phosphodiesterase TM_0186 from Thermotoga maritima (strain ATCC 43589 / DSM 3109 / JCM 10099 / NBRC 100826 / MSB8).